The following is a 397-amino-acid chain: Tryptophan synthase beta chain (397 aa).

K87 carries the post-translational modification N6-(pyridoxal phosphate)lysine.

This sequence belongs to the TrpB family. Tetramer of two alpha and two beta chains. Pyridoxal 5'-phosphate is required as a cofactor.

It catalyses the reaction (1S,2R)-1-C-(indol-3-yl)glycerol 3-phosphate + L-serine = D-glyceraldehyde 3-phosphate + L-tryptophan + H2O. The protein operates within amino-acid biosynthesis; L-tryptophan biosynthesis; L-tryptophan from chorismate: step 5/5. Its function is as follows. The beta subunit is responsible for the synthesis of L-tryptophan from indole and L-serine. The protein is Tryptophan synthase beta chain of Escherichia coli O45:K1 (strain S88 / ExPEC).